A 442-amino-acid polypeptide reads, in one-letter code: Methionine aminopeptidase 2 (442 aa).

The disordered stretch occupies residues 1–81 (MAAQAPTEAL…APTAQSDPPR (81 aa)). The span at 56–72 (PLRRRRRRRRTRKKKKA) shows a compositional bias: basic residues. His-196 lines the substrate pocket. A divalent metal cation-binding residues include Asp-216, Asp-227, and His-296. Residue His-304 participates in substrate binding. Glu-329 and Glu-423 together coordinate a divalent metal cation.

It belongs to the peptidase M24A family. Methionine aminopeptidase eukaryotic type 2 subfamily. Co(2+) serves as cofactor. The cofactor is Zn(2+). It depends on Mn(2+) as a cofactor. Fe(2+) is required as a cofactor.

The protein localises to the cytoplasm. The enzyme catalyses Release of N-terminal amino acids, preferentially methionine, from peptides and arylamides.. Cotranslationally removes the N-terminal methionine from nascent proteins. The N-terminal methionine is often cleaved when the second residue in the primary sequence is small and uncharged (Met-Ala-, Cys, Gly, Pro, Ser, Thr, or Val). The sequence is that of Methionine aminopeptidase 2 from Verticillium alfalfae (strain VaMs.102 / ATCC MYA-4576 / FGSC 10136) (Verticillium wilt of alfalfa).